Reading from the N-terminus, the 305-residue chain is ATP synthase gamma chain (305 aa).

The protein belongs to the ATPase gamma chain family. As to quaternary structure, F-type ATPases have 2 components, CF(1) - the catalytic core - and CF(0) - the membrane proton channel. CF(1) has five subunits: alpha(3), beta(3), gamma(1), delta(1), epsilon(1). CF(0) has three main subunits: a, b and c.

The protein resides in the cell membrane. Functionally, produces ATP from ADP in the presence of a proton gradient across the membrane. The gamma chain is believed to be important in regulating ATPase activity and the flow of protons through the CF(0) complex. This chain is ATP synthase gamma chain, found in Mycobacterium tuberculosis (strain ATCC 25177 / H37Ra).